The sequence spans 498 residues: Glycerol kinase (498 aa).

Position 14 (T14) interacts with ADP. T14, T15, and S16 together coordinate ATP. Residue T14 participates in sn-glycerol 3-phosphate binding. Residue R18 coordinates ADP. 4 residues coordinate sn-glycerol 3-phosphate: R84, E85, Y136, and D245. Positions 84, 85, 136, 245, and 246 each coordinate glycerol. Residues T267 and G310 each coordinate ADP. Residues T267, G310, Q314, and G410 each coordinate ATP. ADP contacts are provided by G410 and N414.

Belongs to the FGGY kinase family.

It carries out the reaction glycerol + ATP = sn-glycerol 3-phosphate + ADP + H(+). It participates in polyol metabolism; glycerol degradation via glycerol kinase pathway; sn-glycerol 3-phosphate from glycerol: step 1/1. With respect to regulation, inhibited by fructose 1,6-bisphosphate (FBP). Functionally, key enzyme in the regulation of glycerol uptake and metabolism. Catalyzes the phosphorylation of glycerol to yield sn-glycerol 3-phosphate. This is Glycerol kinase from Rhodospirillum centenum (strain ATCC 51521 / SW).